Consider the following 202-residue polypeptide: Small ribosomal subunit protein uS5 (202 aa).

A compositionally biased stretch (gly residues) spans 1-13 (MPGQQRRGGGSGG). Residues 1–31 (MPGQQRRGGGSGGSDRRERRDRSGGGPAQEK) form a disordered region. Residues 14–23 (SDRRERRDRS) are compositionally biased toward basic and acidic residues. The region spanning 34–97 (YVERVVAINR…EEAKKHFFKV (64 aa)) is the S5 DRBM domain.

Belongs to the universal ribosomal protein uS5 family. As to quaternary structure, part of the 30S ribosomal subunit. Contacts proteins S4 and S8.

Its function is as follows. With S4 and S12 plays an important role in translational accuracy. Functionally, located at the back of the 30S subunit body where it stabilizes the conformation of the head with respect to the body. The protein is Small ribosomal subunit protein uS5 of Parafrankia sp. (strain EAN1pec).